A 46-amino-acid chain; its full sequence is Esculentin-1SEa (46 aa).

Residues Cys40 and Cys46 are joined by a disulfide bond.

As to expression, expressed by the skin glands.

It is found in the secreted. Its function is as follows. Mast cell degranulating peptide. Causes histamine release from rat peritoneal mast cells in vitro. Has antibacterial activity against the Gram-negative bacterium E.coli K12 and Gram-positive bacterium M.luteus NCT C2665. The protein is Esculentin-1SEa of Lithobates sevosus (Dusky gopher frog).